The following is a 517-amino-acid chain: Crotonobetaine/carnitine--CoA ligase (517 aa).

The protein belongs to the ATP-dependent AMP-binding enzyme family.

The enzyme catalyses 4-(trimethylamino)butanoate + ATP + CoA = 4-(trimethylamino)butanoyl-CoA + AMP + diphosphate. It catalyses the reaction crotonobetaine + ATP + CoA = crotonobetainyl-CoA + AMP + diphosphate. It carries out the reaction (R)-carnitine + ATP + CoA = (R)-carnitinyl-CoA + AMP + diphosphate. Its pathway is amine and polyamine metabolism; carnitine metabolism. In terms of biological role, catalyzes the transfer of CoA to carnitine, generating the initial carnitinyl-CoA needed for the CaiB reaction cycle. Also has activity toward crotonobetaine and gamma-butyrobetaine. This chain is Crotonobetaine/carnitine--CoA ligase, found in Escherichia coli O139:H28 (strain E24377A / ETEC).